A 253-amino-acid polypeptide reads, in one-letter code: Low affinity immunoglobulin gamma Fc region receptor III-B (253 aa).

The first 20 residues, M1–A20, serve as a signal peptide directing secretion. Topologically, residues A21–Q207 are extracellular. 2 consecutive Ig-like C2-type domains span residues P24 to H105 and E120 to T189. Disulfide bonds link C47/C89 and C128/C172. Residues N56, N63, N165, and N180 are each glycosylated (N-linked (GlcNAc...) asparagine). The chain crosses the membrane as a helical span at residues I208–F226. Residues S227–K253 lie on the Cytoplasmic side of the membrane.

Forms a heterooligomeric complex with ITAM-containing signaling subunits FCER1G. Interacts (via transmembrane domain) with signaling subunits; this interaction is a prerequisite for receptor complex expression on the cell surface and intracellular signal transduction. Binds the Fc region of antigen-complexed IgG.

It is found in the cell membrane. Receptor for the invariable Fc fragment of immunoglobulin gamma (IgG). Optimally activated upon binding of clustered antigen-IgG complexes displayed on cell surfaces, triggers lysis of antibody-coated cells, a process known as antibody-dependent cellular cytotoxicity (ADCC). Does not bind free monomeric IgG, thus avoiding inappropriate effector cell activation in the absence of antigenic trigger. Mediates IgG effector functions on natural killer (NK) cells. Binds antigen-IgG complexes generated upon infection and triggers NK cell-dependent cytokine production and degranulation to limit viral load and propagation. Fc-binding subunit that associates with FCER1G adapters to form functional signaling complexes. Following the engagement of antigen-IgG complexes, triggers phosphorylation of immunoreceptor tyrosine-based activation motif (ITAM)-containing adapters with subsequent activation of phosphatidylinositol 3-kinase signaling and sustained elevation of intracellular calcium that ultimately drive NK cell activation. Mediates enhanced ADCC in response to afucosylated IgGs. This chain is Low affinity immunoglobulin gamma Fc region receptor III-B (FCGR3B), found in Oryctolagus cuniculus (Rabbit).